A 295-amino-acid chain; its full sequence is MAVSFQTKNPLRPITNIPRSYGPTRVRVTCSVTTTNPQLNHENLVVEKRLVNPPLSKNNDPTLQSTWTHRLWVAAGSTTIFASFAKSIIGGFGSHLWLQPALACYAGYVFADLGSGVYHWAIDNYGGASTPIVGAQLEASQGHHKYPWTITKRQFANNSYTIARAITFIVLPLNLAINNPLFHSFVSTFAFCILLSQQFHAWAHGTKSKLPPLVMALQDMGLLVSRKDHPGHHQAPYNSNYCVVSGAWNKVLDESNLFKALEMALFFQFGVRPNSWNEPNSDWTEETETNFFTKI.

The transit peptide at 1–29 (MAVSFQTKNPLRPITNIPRSYGPTRVRVT) directs the protein to the chloroplast. Helical transmembrane passes span 72–92 (WVAAGSTTIFASFAKSIIGGF), 102–122 (LACYAGYVFADLGSGVYHWAI), and 175–195 (LAINNPLFHSFVSTFAFCILL).

It belongs to the fatty acid desaturase CarF family.

Its subcellular location is the plastid. It localises to the chloroplast membrane. The protein operates within lipid metabolism; fatty acid metabolism. In terms of biological role, fatty acid desaturase involved in the production of chloroplast-specific phosphatidylglycerol molecular species. Catalyzes the formation of a trans double bond introduced close to the carboxyl group of palmitic acid, which is specifically esterified to the sn-2 glyceryl carbon of phosphatidylglycerol. The polypeptide is Fatty acid desaturase 4-like 1, chloroplastic (FAD4L1) (Arabidopsis thaliana (Mouse-ear cress)).